Reading from the N-terminus, the 224-residue chain is UPF0758 protein BLi02933/BL00636 (224 aa).

One can recognise an MPN domain in the interval 102–224 (VIRFPEDAAN…FVSLKEKGYL (123 aa)). Zn(2+) is bound by residues His173, His175, and Asp186. The JAMM motif motif lies at 173-186 (HNHPSGDPAPSRED).

Belongs to the UPF0758 family.

In Bacillus licheniformis (strain ATCC 14580 / DSM 13 / JCM 2505 / CCUG 7422 / NBRC 12200 / NCIMB 9375 / NCTC 10341 / NRRL NRS-1264 / Gibson 46), this protein is UPF0758 protein BLi02933/BL00636.